Reading from the N-terminus, the 509-residue chain is 3-isopropylmalate dehydratase large subunit, chloroplastic (509 aa).

The span at 1-24 shows a compositional bias: low complexity; it reads MASVISSSPFLCKSSSKSDLGISS. The interval 1–25 is disordered; that stretch reads MASVISSSPFLCKSSSKSDLGISSF. Residues 1 to 47 constitute a chloroplast transit peptide; it reads MASVISSSPFLCKSSSKSDLGISSFPKSSQISIHRCQKKSISRKIVS. Residues cysteine 376, cysteine 445, and cysteine 448 each contribute to the [4Fe-4S] cluster site.

It belongs to the aconitase/IPM isomerase family. In terms of assembly, heterodimer of the large LEUC/IIL1 subunit and the small LEUD (SSU1, SSU2 or SSU3) subunits. [4Fe-4S] cluster serves as cofactor. As to expression, expressed in roots, leaves, stems and flowers. Expressed at low levels in siliques.

Its subcellular location is the plastid. It is found in the chloroplast stroma. The catalysed reaction is (2R,3S)-3-isopropylmalate = (2S)-2-isopropylmalate. It catalyses the reaction a 2-(omega-methylsulfanyl)alkylmalate = a 2-(omega-methylsulfanyl)alkylmaleate + H2O. It carries out the reaction 2-(3-methylsulfanyl)propylmalate = 2-(2-methylsulfanyl)propylmaleate + H2O. The enzyme catalyses a 3-(omega-methylsulfanyl)alkylmalate = a 2-(omega-methylsulfanyl)alkylmaleate + H2O. The catalysed reaction is 2-(2-methylsulfanyl)ethylmalate = 2-(2-methylsulfanyl)ethylmaleate + H2O. It catalyses the reaction 3-(2-methylsulfanyl)ethylmalate = 2-(2-methylsulfanyl)ethylmaleate + H2O. It carries out the reaction 3-(3-methylsulfanyl)propylmalate = 2-(2-methylsulfanyl)propylmaleate + H2O. The protein operates within amino-acid biosynthesis; L-leucine biosynthesis; L-leucine from 3-methyl-2-oxobutanoate: step 2/4. Catalyzes the isomerization between 2-isopropylmalate and 3-isopropylmalate, via the formation of 2-isopropylmaleate. Functions in both the biosynthesis of leucine and in the methionine chain elongation pathway of aliphatic glucosinolate formation. This chain is 3-isopropylmalate dehydratase large subunit, chloroplastic, found in Arabidopsis thaliana (Mouse-ear cress).